Here is a 621-residue protein sequence, read N- to C-terminus: Kelch-like protein 40 (621 aa).

The region spanning 33–98 (LDCVVRVGER…LYTSEIALDE (66 aa)) is the BTB domain. Residues 133 to 239 (CLAVFRLGLL…PRAFLETRVE (107 aa)) enclose the BACK domain. The disordered stretch occupies residues 265-298 (LTTLRKKKKEKGEQTARAKEANQGTEDTKAEDDE). Basic and acidic residues predominate over residues 274-284 (EKGEQTARAKE). Kelch repeat units follow at residues 360–412 (QVFV…EALN), 413–462 (AIYV…SHMD), 463–510 (LVYV…VHDG), 512–557 (IFVA…SLAG), and 559–613 (LYAL…PVRL).

It belongs to the KLHL40 family. In terms of assembly, component of the BCR(KLHL40) E3 ubiquitin ligase complex, at least composed of CUL3, KLHL40 and RBX1. Interacts with LMOD3. In terms of tissue distribution, specifically expressed in skeletal muscles in embryonic, neonatal and adults. Expressed in various types of muscles, including extensor digitorum longus, gastrocnemius, soleus, diaphragm, masseter and heart (at protein level). Not detected in brain, liver and lung (at protein level).

The protein resides in the cytoplasm. It localises to the myofibril. It is found in the sarcomere. The protein localises to the a band. Its subcellular location is the i band. Substrate-specific adapter of a BCR (BTB-CUL3-RBX1) E3 ubiquitin ligase complex that acts as a key regulator of skeletal muscle development. The BCR(KLHL40) complex acts by mediating ubiquitination and degradation of TFDP1, thereby regulating the activity of the E2F:DP transcription factor complex. Promotes stabilization of LMOD3 by acting as a negative regulator of LMOD3 ubiquitination; the molecular process by which it negatively regulates ubiquitination of LMOD3 is however unclear. In Mus musculus (Mouse), this protein is Kelch-like protein 40.